The following is a 537-amino-acid chain: Hexahomomethionine N-hydroxylase (537 aa).

Residues 7–27 (FNTCFQILLGFIVFIASITLL) form a helical membrane-spanning segment.

Belongs to the cytochrome P450 family. It depends on heme as a cofactor. In terms of tissue distribution, highly expressed in hypocotyl and roots. Lower expression in siliques, stems and leaves. Barely detectable in flowers. Expressed only in the vascular bundles in apical plant parts.

The protein localises to the endoplasmic reticulum membrane. The enzyme catalyses L-hexahomomethionine + 2 reduced [NADPH--hemoprotein reductase] + 2 O2 = (E)-9-(methylsulfanyl)nonanal oxime + 2 oxidized [NADPH--hemoprotein reductase] + CO2 + 3 H2O + 2 H(+). The catalysed reaction is L-pentahomomethionine + 2 reduced [NADPH--hemoprotein reductase] + 2 O2 = (E)-8-(methylsulfanyl)octanal oxime + 2 oxidized [NADPH--hemoprotein reductase] + CO2 + 3 H2O + 2 H(+). It catalyses the reaction an L-polyhomomethionine + 2 reduced [NADPH--hemoprotein reductase] + 2 O2 = an (E)-omega-(methylsulfanyl)-alkanal oxime + 2 oxidized [NADPH--hemoprotein reductase] + CO2 + 3 H2O + 2 H(+). In terms of biological role, catalyzes the conversion of the long chain elongated methionines penta- and hexahomomethionine to their corresponding aldoximes 8-methylthiooctanaldoxime and 9-methylthiononanaldoxime. The chain is Hexahomomethionine N-hydroxylase (CYP79F2) from Arabidopsis thaliana (Mouse-ear cress).